Here is a 230-residue protein sequence, read N- to C-terminus: Somatolactin (230 aa).

An N-terminal signal peptide occupies residues 1 to 25; sequence MHTKVLQQGLWALLLWPHLFTVSVP. 3 disulfide bridges follow: Cys28–Cys38, Cys88–Cys204, and Cys221–Cys229. N-linked (GlcNAc...) asparagine glycosylation is present at Asn144.

Belongs to the somatotropin/prolactin family.

The protein resides in the secreted. In terms of biological role, selectively regulates proliferation and morphogenesis of neural-crest derived pigment cells. This Oryzias latipes (Japanese rice fish) protein is Somatolactin.